An 82-amino-acid polypeptide reads, in one-letter code: Small ribosomal subunit protein bS16 (82 aa).

Belongs to the bacterial ribosomal protein bS16 family.

The protein is Small ribosomal subunit protein bS16 of Vibrio parahaemolyticus serotype O3:K6 (strain RIMD 2210633).